Reading from the N-terminus, the 145-residue chain is MDHGNMPPSSPSSMVNHTNSNMIMMHMTFFWGKNTEILFSGWPGTSLGMYVLCLIVVFLLAVIVEWLAHSSILRGRGSTSRAKGLVQTAVYTLKTGLAYLVMLAVMSFNGGVFIVAIAGFAVGFMLFGSTAFKNPSDDEKPFEQL.

Helical transmembrane passes span 47-67 (LGMY…VEWL) and 99-119 (YLVM…AIAG).

It belongs to the copper transporter (Ctr) (TC 1.A.56) family. SLC31A subfamily.

It is found in the membrane. Functionally, involved in the transport of copper. This chain is Copper transporter 6 (COPT6), found in Arabidopsis thaliana (Mouse-ear cress).